The primary structure comprises 182 residues: Methyl-coenzyme M reductase operon protein C (182 aa).

MCR is composed of three subunits: alpha, beta, and gamma. The function of proteins C and D is not known.

The chain is Methyl-coenzyme M reductase operon protein C (mcrC) from Methanococcus voltae.